We begin with the raw amino-acid sequence, 618 residues long: 1-deoxy-D-xylulose-5-phosphate synthase (618 aa).

Thiamine diphosphate-binding positions include His77 and Gly118–Ser120. A Mg(2+)-binding site is contributed by Asp149. Residues Gly150–Ala151, Asn178, Tyr285, and Glu367 each bind thiamine diphosphate. Asn178 lines the Mg(2+) pocket.

The protein belongs to the transketolase family. DXPS subfamily. Homodimer. Requires Mg(2+) as cofactor. Thiamine diphosphate serves as cofactor.

The catalysed reaction is D-glyceraldehyde 3-phosphate + pyruvate + H(+) = 1-deoxy-D-xylulose 5-phosphate + CO2. Its pathway is metabolic intermediate biosynthesis; 1-deoxy-D-xylulose 5-phosphate biosynthesis; 1-deoxy-D-xylulose 5-phosphate from D-glyceraldehyde 3-phosphate and pyruvate: step 1/1. Catalyzes the acyloin condensation reaction between C atoms 2 and 3 of pyruvate and glyceraldehyde 3-phosphate to yield 1-deoxy-D-xylulose-5-phosphate (DXP). The sequence is that of 1-deoxy-D-xylulose-5-phosphate synthase from Idiomarina loihiensis (strain ATCC BAA-735 / DSM 15497 / L2-TR).